Consider the following 346-residue polypeptide: Nuclear distribution protein nudE-like 1 (346 aa).

Residues 13 to 190 (KEEIVYWREL…LAVRERQTNG (178 aa)) are a coiled coil. Disordered regions lie at residues 184 to 205 (RERQ…DCDK) and 325 to 346 (YDPP…PLSV). Residues 188-200 (TNGTRKSAPSSPT) are compositionally biased toward polar residues. The segment covering 335–346 (PPSPPGMLPLSV) has biased composition (pro residues).

Belongs to the nudE family. In terms of processing, phosphorylated in mitosis.

Its subcellular location is the cytoplasm. The protein resides in the cytoskeleton. It is found in the microtubule organizing center. The protein localises to the centrosome. It localises to the spindle. Functionally, required for organization of the cellular microtubule array and microtubule anchoring at the centrosome. Positively regulates the activity of the minus-end directed microtubule motor protein dynein. May enhance dynein-mediated microtubule sliding by targeting dynein to the microtubule plus end. Positively regulates lysosome peripheral distribution and ruffled border formation in osteoclasts. The sequence is that of Nuclear distribution protein nudE-like 1 (ndel1) from Xenopus tropicalis (Western clawed frog).